The chain runs to 187 residues: Adenine phosphoribosyltransferase (187 aa).

Residue 133–137 (ATGGS) coordinates AMP.

Belongs to the purine/pyrimidine phosphoribosyltransferase family. As to quaternary structure, homodimer. Requires Mg(2+) as cofactor.

The protein localises to the cytoplasm. The protein resides in the nucleus. The enzyme catalyses AMP + diphosphate = 5-phospho-alpha-D-ribose 1-diphosphate + adenine. It functions in the pathway purine metabolism; AMP biosynthesis via salvage pathway; AMP from adenine: step 1/1. Its function is as follows. Catalyzes a salvage reaction resulting in the formation of AMP, that is energically less costly than de novo synthesis. The protein is Adenine phosphoribosyltransferase (APT1) of Eremothecium gossypii (strain ATCC 10895 / CBS 109.51 / FGSC 9923 / NRRL Y-1056) (Yeast).